The following is a 62-amino-acid chain: Putative antitoxin AF_1095 (62 aa).

Belongs to the UPF0165 family.

Possibly the antitoxin component of a type II toxin-antitoxin (TA) system. The polypeptide is Putative antitoxin AF_1095 (Archaeoglobus fulgidus (strain ATCC 49558 / DSM 4304 / JCM 9628 / NBRC 100126 / VC-16)).